The sequence spans 557 residues: Potassium-transporting ATPase potassium-binding subunit (557 aa).

Helical transmembrane passes span 6–26, 59–79, 127–147, 172–192, 247–267, 278–298, 363–383, 410–430, 475–495, and 520–540; these read IQLL…GLGL, ALSL…ILFF, AGLT…LLAL, LYVL…FGVV, ISNF…VFLY, WAIF…VWTF, IVFG…LLTV, ILGI…SVSV, VMIA…VLVI, and FYIL…FPVL.

This sequence belongs to the KdpA family. As to quaternary structure, the system is composed of three essential subunits: KdpA, KdpB and KdpC.

It localises to the cell inner membrane. Its function is as follows. Part of the high-affinity ATP-driven potassium transport (or Kdp) system, which catalyzes the hydrolysis of ATP coupled with the electrogenic transport of potassium into the cytoplasm. This subunit binds the periplasmic potassium ions and delivers the ions to the membrane domain of KdpB through an intramembrane tunnel. This is Potassium-transporting ATPase potassium-binding subunit from Leptospira interrogans serogroup Icterohaemorrhagiae serovar Lai (strain 56601).